The following is a 713-amino-acid chain: Nucleolin (713 aa).

Residues 1–309 (MVKLAKAGKT…QKIEGSEPTT (309 aa)) are disordered. N6-acetyllysine is present on residues K9, K15, and K16. Residues 24-46 (VEEDSEDEEMSEDEDDSSGEEEV) are compositionally biased toward acidic residues. Phosphoserine occurs at positions 28, 34, 40, and 41. Low complexity predominate over residues 56–111 (ATTTPAKKVVVSQTKKAAVPTPAKKAAVTPGKKAAATPAKKAVTPAKVVPTPGKKG). Copy 1 of the repeat occupies 58 to 65 (TTPAKKVV). The interval 58–135 (TTPAKKVVVS…GAVTPAKGAK (78 aa)) is 8 X 8 AA tandem repeats of X-T-P-X-K-K-X-X. S67 carries the post-translational modification Phosphoserine. Residues T69, T76, T84, and T92 each carry the phosphothreonine modification. Tandem repeats lie at residues 75-82 (PTPAKKAA), 83-90 (VTPGKKAA), and 91-98 (ATPAKKAV). The residue at position 96 (K96) is an N6-acetyllysine. T99 carries the post-translational modification Phosphothreonine. Residues 99-104 (TPAKVV) form a 5; truncated repeat. K102 carries the post-translational modification N6-acetyllysine. Repeat unit 6 spans residues 105–112 (PTPGKKGA). T106 bears the Phosphothreonine mark. N6-acetyllysine occurs at positions 109 and 116. 2 repeat units span residues 120-127 (PTPGKKGA) and 128-135 (VTPAKGAK). Position 121 is a phosphothreonine (T121). K124 bears the N6-acetyllysine mark. 2 positions are modified to phosphoserine: S145 and S157. Positions 145-168 (SDEDEDEEDEDDSDEDEDEEDEFE) are enriched in acidic residues. Low complexity predominate over residues 169-186 (PPVVKGVKPAKAAPAAPA). Phosphoserine is present on residues S187 and S213. Acidic residues predominate over residues 187 to 218 (SEDEDEEDDDDEDDDDDDEEEEEEDDSEEEVM). Residue T221 is modified to Phosphothreonine. Over residues 242–275 (EEEEDDEDDEDEEEDEDEEDEEDDEDEDEEEEEE) the composition is skewed to acidic residues. Residues 288–304 (MTKQKEAPEAKKQKIEG) show a composition bias toward basic and acidic residues. K301 participates in a covalent cross-link: Glycyl lysine isopeptide (Lys-Gly) (interchain with G-Cter in SUMO1); alternate. K301 participates in a covalent cross-link: Glycyl lysine isopeptide (Lys-Gly) (interchain with G-Cter in SUMO2); alternate. S305 carries the post-translational modification Phosphoserine. 2 RRM domains span residues 311–387 (FNLF…KPKG) and 397–470 (RTLL…YTGE). N6-acetyllysine is present on K322. K328 is covalently cross-linked (Glycyl lysine isopeptide (Lys-Gly) (interchain with G-Cter in SUMO1); alternate). Residue K328 forms a Glycyl lysine isopeptide (Lys-Gly) (interchain with G-Cter in SUMO2); alternate linkage. At K352 the chain carries N6-acetyllysine. S360 is modified (phosphoserine). Position 371 is a phosphothreonine (T371). A Glycyl lysine isopeptide (Lys-Gly) (interchain with G-Cter in SUMO2) cross-link involves residue K374. K381 participates in a covalent cross-link: Glycyl lysine isopeptide (Lys-Gly) (interchain with G-Cter in SUMO2); alternate. At K381 the chain carries N6-acetyllysine; alternate. K402 is modified (N6-acetyllysine). S405 bears the Phosphoserine mark. A Phosphothreonine modification is found at T409. N6-acetyllysine is present on K448. S462 and S464 each carry phosphoserine. An N6-acetyllysine mark is found at K471 and K480. Residues 489–563 (KTLVLSNLSY…RTIRLELQGP (75 aa)) form the RRM 3 domain. K516 participates in a covalent cross-link: Glycyl lysine isopeptide (Lys-Gly) (interchain with G-Cter in SUMO2); alternate. K516 bears the N6-acetyllysine; alternate mark. An N6-acetyllysine modification is found at K524. A Phosphoserine modification is found at S566. K575 bears the N6-acetyllysine mark. Positions 575–650 (KTLFVKGLSE…NKVTLDWAKP (76 aa)) constitute an RRM 4 domain. Residue K580 forms a Glycyl lysine isopeptide (Lys-Gly) (interchain with G-Cter in SUMO2); alternate linkage. K580 carries the post-translational modification N6-acetyllysine; alternate. Residue S583 is modified to Phosphoserine. K592 participates in a covalent cross-link: Glycyl lysine isopeptide (Lys-Gly) (interchain with G-Cter in SUMO1); alternate. Residue K592 forms a Glycyl lysine isopeptide (Lys-Gly) (interchain with G-Cter in SUMO2); alternate linkage. A phosphoserine mark is found at S594 and S622. K627 participates in a covalent cross-link: Glycyl lysine isopeptide (Lys-Gly) (interchain with G-Cter in SUMO2). Residues 645-713 (LDWAKPKGEG…KPQGKKTKFE (69 aa)) are disordered. At K649 the chain carries N6-acetyllysine. The segment covering 653 to 702 (EGGFGGRGGGRGGFGGRGGGRGGRGGFGGRGRGGFGGRGGFRGGRGGGGD) has biased composition (gly residues). 9 positions are modified to asymmetric dimethylarginine: R659, R663, R669, R673, R676, R682, R684, R690, and R694. Position 697 is an asymmetric dimethylarginine; alternate (R697). Residue R697 is modified to Omega-N-methylarginine; alternate.

Identified in a IGF2BP1-dependent mRNP granule complex containing untranslated mRNAs. Component of the SWAP complex that consists of NPM1, NCL/nucleolin, PARP1 and SWAP70. Component of a complex which is at least composed of HTATSF1/Tat-SF1, the P-TEFb complex components CDK9 and CCNT1, RNA polymerase II, SUPT5H, and NCL/nucleolin. Interacts with AICDA. Interacts with APTX. Interacts with C1QBP. Interacts with ERBB4. Interacts (via C-terminus) with FMR1 isoform 6 (via N-terminus). Interacts with GZF1; this interaction is important for nucleolar localization of GZF1. Interacts with NSUN2. Interacts with NVL. Interacts (via N-terminus domain) with SETX. Interacts (via RRM1 and C-terminal RRM4/Arg/Gly-rich domains) with TERT; the interaction is important for nucleolar localization of TERT. Interacts with WDR46. Interacts with ZFP36. Interacts with LRRC34. Interacts with RRP1B. Interacts with HNRNPU; this interaction occurs during mitosis. Interacts with RIOK1; RIOK1 recruits NCL to PRMT5 for symmetrically methylation. Interacts with ZBTB7B. Interacts with MDK; this interaction promotes NCL clustering and lateral movements of this complex into lipid rafts leading to MDK internalization. Interacts with HDGF. Interacts with ALKBH2. Interacts with IGFBP5; this interaction is necessary for IGFBP5 localization to the nucleus. Interacts with DDX24 (when ubiquitinated); this interaction may be important during ribosome biogenesis. Some glutamate residues are glycylated by TTLL8. This modification occurs exclusively on glutamate residues and results in a glycine chain on the gamma-carboxyl group. Post-translationally, symmetrically methylated by PRMT5.

It is found in the nucleus. It localises to the nucleolus. The protein resides in the cytoplasm. In terms of biological role, nucleolin is the major nucleolar protein of growing eukaryotic cells. It is found associated with intranucleolar chromatin and pre-ribosomal particles. It induces chromatin decondensation by binding to histone H1. It is thought to play a role in pre-rRNA transcription and ribosome assembly. May play a role in the process of transcriptional elongation. Binds RNA oligonucleotides with 5'-UUAGGG-3' repeats more tightly than the telomeric single-stranded DNA 5'-TTAGGG-3' repeats. This chain is Nucleolin (Ncl), found in Rattus norvegicus (Rat).